We begin with the raw amino-acid sequence, 402 residues long: CCA-adding enzyme (402 aa).

The ATP site is built by glycine 32 and arginine 35. The CTP site is built by glycine 32 and arginine 35. 2 residues coordinate Mg(2+): aspartate 45 and aspartate 47. Residues arginine 119, aspartate 162, arginine 165, arginine 168, and arginine 171 each coordinate ATP. Residues arginine 119, aspartate 162, arginine 165, arginine 168, and arginine 171 each coordinate CTP.

Belongs to the tRNA nucleotidyltransferase/poly(A) polymerase family. Bacterial CCA-adding enzyme type 3 subfamily. As to quaternary structure, homodimer. Mg(2+) is required as a cofactor.

It catalyses the reaction a tRNA precursor + 2 CTP + ATP = a tRNA with a 3' CCA end + 3 diphosphate. It carries out the reaction a tRNA with a 3' CCA end + 2 CTP + ATP = a tRNA with a 3' CCACCA end + 3 diphosphate. Its function is as follows. Catalyzes the addition and repair of the essential 3'-terminal CCA sequence in tRNAs without using a nucleic acid template. Adds these three nucleotides in the order of C, C, and A to the tRNA nucleotide-73, using CTP and ATP as substrates and producing inorganic pyrophosphate. tRNA 3'-terminal CCA addition is required both for tRNA processing and repair. Also involved in tRNA surveillance by mediating tandem CCA addition to generate a CCACCA at the 3' terminus of unstable tRNAs. While stable tRNAs receive only 3'-terminal CCA, unstable tRNAs are marked with CCACCA and rapidly degraded. The polypeptide is CCA-adding enzyme (Lactococcus lactis subsp. cremoris (strain MG1363)).